The following is a 252-amino-acid chain: Methionine aminopeptidase (252 aa).

H76 lines the substrate pocket. 3 residues coordinate a divalent metal cation: D93, D104, and H168. H175 contacts substrate. A divalent metal cation contacts are provided by E202 and E233.

It belongs to the peptidase M24A family. Methionine aminopeptidase type 1 subfamily. In terms of assembly, monomer. Co(2+) is required as a cofactor. It depends on Zn(2+) as a cofactor. Mn(2+) serves as cofactor. The cofactor is Fe(2+).

It catalyses the reaction Release of N-terminal amino acids, preferentially methionine, from peptides and arylamides.. Its function is as follows. Removes the N-terminal methionine from nascent proteins. The N-terminal methionine is often cleaved when the second residue in the primary sequence is small and uncharged (Met-Ala-, Cys, Gly, Pro, Ser, Thr, or Val). Requires deformylation of the N(alpha)-formylated initiator methionine before it can be hydrolyzed. The chain is Methionine aminopeptidase from Staphylococcus aureus (strain MRSA252).